The sequence spans 163 residues: Phosphopantetheine adenylyltransferase (163 aa).

Residue S11 participates in substrate binding. Residues 11–12 and H19 contribute to the ATP site; that span reads SF. Substrate is bound by residues K43, L75, and R89. Residues 90 to 92, E100, and 125 to 131 each bind ATP; these read GLR and YSFLSSS.

The protein belongs to the bacterial CoaD family. Homohexamer. Mg(2+) serves as cofactor.

The protein localises to the cytoplasm. The catalysed reaction is (R)-4'-phosphopantetheine + ATP + H(+) = 3'-dephospho-CoA + diphosphate. It participates in cofactor biosynthesis; coenzyme A biosynthesis; CoA from (R)-pantothenate: step 4/5. Functionally, reversibly transfers an adenylyl group from ATP to 4'-phosphopantetheine, yielding dephospho-CoA (dPCoA) and pyrophosphate. This chain is Phosphopantetheine adenylyltransferase, found in Lysinibacillus sphaericus (strain C3-41).